We begin with the raw amino-acid sequence, 95 residues long: FXYD domain-containing ion transport regulator 6 (95 aa).

The signal sequence occupies residues 1 to 18 (MEVVLLFLCGLLAPAVLA). Over 19–35 (SATEQEKEKDPFHYDYQ) the chain is Extracellular. A helical membrane pass occupies residues 36–58 (TLRIGGLVFAVVLFSVGILLILS). The Cytoplasmic portion of the chain corresponds to 59–95 (RRCKCSFNQKPRAPGDEEAQVENLVTANATEPQKAEN). Residues 69-95 (PRAPGDEEAQVENLVTANATEPQKAEN) form a disordered region.

It belongs to the FXYD family. As to quaternary structure, regulatory subunit of the sodium/potassium-transporting ATPase which is composed of a catalytic alpha subunit, a non-catalytic beta subunit and an additional regulatory subunit. The regulatory subunit, a member of the FXYD protein family, modulates the enzymatic activity in a tissue- and isoform-specific way by changing affinities of the Na+/K+-ATPase toward Na(+), K(+) or ATP.

The protein resides in the cell membrane. In terms of biological role, associates with and regulates the activity of the sodium/potassium-transporting ATPase (NKA) which catalyzes the hydrolysis of ATP coupled with the exchange of Na(+) and K(+) ions across the plasma membrane. Reduces the apparent affinity for intracellular Na(+) with no change in the apparent affinity for extracellular K(+). In addition to modulating NKA kinetics, may also function as a regulator of NKA localization to the plasma membrane. This Bos taurus (Bovine) protein is FXYD domain-containing ion transport regulator 6 (FXYD6).